We begin with the raw amino-acid sequence, 435 residues long: UDP-N-acetylmuramate--L-alanine ligase (435 aa).

108–114 (GSHGKTS) serves as a coordination point for ATP.

Belongs to the MurCDEF family.

It is found in the cytoplasm. The enzyme catalyses UDP-N-acetyl-alpha-D-muramate + L-alanine + ATP = UDP-N-acetyl-alpha-D-muramoyl-L-alanine + ADP + phosphate + H(+). It participates in cell wall biogenesis; peptidoglycan biosynthesis. Cell wall formation. The chain is UDP-N-acetylmuramate--L-alanine ligase from Exiguobacterium sp. (strain ATCC BAA-1283 / AT1b).